Reading from the N-terminus, the 470-residue chain is Iron-sulfur cluster assembly protein SufB (470 aa).

The protein belongs to the iron-sulfur cluster assembly SufBD family. Component of a complex composed of SufB, SufC and SufD in a stoichiometric ratio of 1:2:1. Interacts with SufC. Interacts with SufD.

It functions in the pathway cofactor biosynthesis; iron-sulfur cluster biosynthesis. Its function is as follows. Participates in the sulfur mobilization (SUF) pathway for iron-sulfur (Fe-S) cluster biogenesis. As part of a complex consisting of SufB-SufC(2)-SufD, involved in assembly of [4Fe-4S] clusters. Exhibits ATPase activity. This Plasmodium falciparum (isolate 3D7) protein is Iron-sulfur cluster assembly protein SufB.